Reading from the N-terminus, the 246-residue chain is MAYLRSSFVFFLLAFVTYTYAATIEVRNNCPYTVWAASTPIGGGRRLDRGQTWVINAPRGTKMARIWGRTNCNFDGAGRGSCQTGDCGGVLQCTGWGKPPNTLAEYALDQFSNLDFWDISLVDGFNIPMTFAPTNPSGGKCHAIHCTANINGECPGSLRVPGGCNNPCTTFGGQQYCCTQGPCGPTDLSRFFKQRCPDAYSYPQDDPTSTFTCPSGSTNYRVVFCPNGVTSPNFPLEMPASDEEAK.

A signal peptide spans 1 to 21; that stretch reads MAYLRSSFVFFLLAFVTYTYA. 8 cysteine pairs are disulfide-bonded: Cys-30–Cys-225, Cys-72–Cys-82, Cys-87–Cys-93, Cys-141–Cys-213, Cys-146–Cys-196, Cys-154–Cys-164, Cys-168–Cys-177, and Cys-178–Cys-183.

Belongs to the thaumatin family.

The chain is Osmotin-like protein OSML13 from Solanum commersonii (Commerson's wild potato).